A 188-amino-acid polypeptide reads, in one-letter code: Adenine phosphoribosyltransferase (188 aa).

AMP is bound at residue 134–138 (ATGGS).

The protein belongs to the purine/pyrimidine phosphoribosyltransferase family. Homodimer. Mg(2+) serves as cofactor.

Its subcellular location is the cytoplasm. The protein resides in the nucleus. The catalysed reaction is AMP + diphosphate = 5-phospho-alpha-D-ribose 1-diphosphate + adenine. It participates in purine metabolism; AMP biosynthesis via salvage pathway; AMP from adenine: step 1/1. Its function is as follows. Catalyzes a salvage reaction resulting in the formation of AMP, that is energically less costly than de novo synthesis. This chain is Adenine phosphoribosyltransferase (APT1), found in Candida albicans (strain SC5314 / ATCC MYA-2876) (Yeast).